Consider the following 305-residue polypeptide: Ribosomal RNA small subunit methyltransferase H (305 aa).

Residues 49 to 51 (GGH), D68, F100, D116, and Q123 each bind S-adenosyl-L-methionine.

This sequence belongs to the methyltransferase superfamily. RsmH family.

The protein localises to the cytoplasm. The catalysed reaction is cytidine(1402) in 16S rRNA + S-adenosyl-L-methionine = N(4)-methylcytidine(1402) in 16S rRNA + S-adenosyl-L-homocysteine + H(+). Functionally, specifically methylates the N4 position of cytidine in position 1402 (C1402) of 16S rRNA. In Synechocystis sp. (strain ATCC 27184 / PCC 6803 / Kazusa), this protein is Ribosomal RNA small subunit methyltransferase H.